The sequence spans 361 residues: MNLIYNFSAGPAMIPRDVLNQAKKELHNWKNLGSSIMEISHRSEEFIQMALEAEKDLRDLLKIPDSFKVLFCQGGARGQFSAIPMNLLNNLQTADYINSGYWSNSAFMEAKKYCTPRSIFIRETNGVKESLLPMHKWNINENSAYIHYCPNETIDGLSIYEEPVFENKIVVGDFSSFILSRSINIKNYDLIYAGAQKNIGPAGITIIIIRKNIIGYSSKMTPSILDYKKISDHHSMFNTPPTFAWYLSGLVFKWLKKQGGLKAIEKLNKKKSDLLYKKIDNSDFYINKINSKHRSQMNVVFHLVNPKLNYIFLKEASKTGLNYLRGHSIVGGMRASLYNAMPLEGVESLVKFMSYFEKRYG.

Arg-42 provides a ligand contact to L-glutamate. Residues 76-77 (AR), Trp-102, Thr-153, Asp-173, and Gln-196 contribute to the pyridoxal 5'-phosphate site. Lys-197 bears the N6-(pyridoxal phosphate)lysine mark. 238–239 (NT) provides a ligand contact to pyridoxal 5'-phosphate.

Belongs to the class-V pyridoxal-phosphate-dependent aminotransferase family. SerC subfamily. In terms of assembly, homodimer. The cofactor is pyridoxal 5'-phosphate.

It is found in the cytoplasm. It catalyses the reaction O-phospho-L-serine + 2-oxoglutarate = 3-phosphooxypyruvate + L-glutamate. The catalysed reaction is 4-(phosphooxy)-L-threonine + 2-oxoglutarate = (R)-3-hydroxy-2-oxo-4-phosphooxybutanoate + L-glutamate. It functions in the pathway amino-acid biosynthesis; L-serine biosynthesis; L-serine from 3-phospho-D-glycerate: step 2/3. The protein operates within cofactor biosynthesis; pyridoxine 5'-phosphate biosynthesis; pyridoxine 5'-phosphate from D-erythrose 4-phosphate: step 3/5. In terms of biological role, catalyzes the reversible conversion of 3-phosphohydroxypyruvate to phosphoserine and of 3-hydroxy-2-oxo-4-phosphonooxybutanoate to phosphohydroxythreonine. The chain is Phosphoserine aminotransferase from Buchnera aphidicola subsp. Acyrthosiphon pisum (strain 5A).